Reading from the N-terminus, the 288-residue chain is Putative branched-chain-amino-acid aminotransferase (288 aa).

Lys146 bears the N6-(pyridoxal phosphate)lysine mark.

Belongs to the class-IV pyridoxal-phosphate-dependent aminotransferase family. Requires pyridoxal 5'-phosphate as cofactor.

It carries out the reaction L-leucine + 2-oxoglutarate = 4-methyl-2-oxopentanoate + L-glutamate. The catalysed reaction is L-isoleucine + 2-oxoglutarate = (S)-3-methyl-2-oxopentanoate + L-glutamate. It catalyses the reaction L-valine + 2-oxoglutarate = 3-methyl-2-oxobutanoate + L-glutamate. It participates in amino-acid biosynthesis; L-isoleucine biosynthesis; L-isoleucine from 2-oxobutanoate: step 4/4. Its pathway is amino-acid biosynthesis; L-leucine biosynthesis; L-leucine from 3-methyl-2-oxobutanoate: step 4/4. It functions in the pathway amino-acid biosynthesis; L-valine biosynthesis; L-valine from pyruvate: step 4/4. Its function is as follows. Acts on leucine, isoleucine and valine. The polypeptide is Putative branched-chain-amino-acid aminotransferase (ilvE) (Methanocaldococcus jannaschii (strain ATCC 43067 / DSM 2661 / JAL-1 / JCM 10045 / NBRC 100440) (Methanococcus jannaschii)).